A 555-amino-acid chain; its full sequence is Urocanate hydratase (555 aa).

Residues 52 to 53, glutamine 130, 176 to 178, glutamate 196, arginine 201, 242 to 243, 263 to 267, 273 to 274, and tyrosine 322 contribute to the NAD(+) site; these read GG, GMG, NA, QTSAH, and YL. Cysteine 410 is an active-site residue. Residue glycine 492 coordinates NAD(+).

Belongs to the urocanase family. NAD(+) is required as a cofactor.

The protein localises to the cytoplasm. It carries out the reaction 4-imidazolone-5-propanoate = trans-urocanate + H2O. It participates in amino-acid degradation; L-histidine degradation into L-glutamate; N-formimidoyl-L-glutamate from L-histidine: step 2/3. In terms of biological role, catalyzes the conversion of urocanate to 4-imidazolone-5-propionate. This Shewanella baltica (strain OS185) protein is Urocanate hydratase.